The following is a 416-amino-acid chain: Serine hydroxymethyltransferase (416 aa).

(6S)-5,6,7,8-tetrahydrofolate-binding positions include Leu121 and 125–127; that span reads GHL. Lys229 bears the N6-(pyridoxal phosphate)lysine mark.

It belongs to the SHMT family. In terms of assembly, homodimer. Pyridoxal 5'-phosphate is required as a cofactor.

The protein localises to the cytoplasm. It carries out the reaction (6R)-5,10-methylene-5,6,7,8-tetrahydrofolate + glycine + H2O = (6S)-5,6,7,8-tetrahydrofolate + L-serine. It participates in one-carbon metabolism; tetrahydrofolate interconversion. It functions in the pathway amino-acid biosynthesis; glycine biosynthesis; glycine from L-serine: step 1/1. Functionally, catalyzes the reversible interconversion of serine and glycine with tetrahydrofolate (THF) serving as the one-carbon carrier. This reaction serves as the major source of one-carbon groups required for the biosynthesis of purines, thymidylate, methionine, and other important biomolecules. Also exhibits THF-independent aldolase activity toward beta-hydroxyamino acids, producing glycine and aldehydes, via a retro-aldol mechanism. This is Serine hydroxymethyltransferase from Neisseria meningitidis serogroup C (strain 053442).